Consider the following 580-residue polypeptide: Opioid growth factor receptor (580 aa).

Methionine 1 carries the post-translational modification N-acetylmethionine. A compositionally biased stretch (acidic residues) spans 1–38; the sequence is MDDPDCDSTWEEESEEDGEDGQADDTTDEDTGDDDGDA. Disordered regions lie at residues 1–44 and 285–390; these read MDDP…ARPS and FKPQ…VSEV. The short motif at 257–286 is the Bipartite nuclear localization signal element; sequence RRELVYFAWEHFKPRREFVWGPRDKLRRFK. A compositionally biased stretch (basic and acidic residues) spans 300 to 310; the sequence is ADKDEGSRDPS. Serine 327, serine 361, serine 365, and serine 403 each carry phosphoserine. A compositionally biased stretch (basic and acidic residues) spans 352-374; sequence NQRDEAKSLSPKESKKRKLEGNR. The tract at residues 405–580 is disordered; that stretch reads ISQEPREAEP…IEASAEPPKP (176 aa). Tandem repeats lie at residues 467–475, 476–484, 485–493, 494–502, 503–511, 512–520, 521–529, and 530–538. Residues 467–538 form an 8 X approximate tandem repeats region; that stretch reads GPEDSNSQVG…VGPEDPNSQV (72 aa). The segment covering 489–538 has biased composition (polar residues); that stretch reads PNSQVGLEDPNSQVGPEDPNSQVGPEDPNSQVGPEDPNSQVGPEDPNSQV. 2 positions are modified to phosphoserine: serine 548 and serine 555.

It belongs to the opioid growth factor receptor family. As to expression, highly expressed in 6-day old cerebellum and brain. Lower expressed in adult cerebellum. The protein is detected in germinal cells of the cerebellum, in neurons of the deep cerebellar nuclei and in the glia in the medullary layer.

It localises to the cytoplasm. It is found in the perinuclear region. The protein resides in the nucleus. In terms of biological role, receptor for opioid growth factor (OGF), also known as Met-enkephalin. Seems to be involved in growth regulation. This is Opioid growth factor receptor (Ogfr) from Rattus norvegicus (Rat).